A 162-amino-acid polypeptide reads, in one-letter code: Putative pre-16S rRNA nuclease (162 aa).

The protein belongs to the YqgF nuclease family.

The protein resides in the cytoplasm. Functionally, could be a nuclease involved in processing of the 5'-end of pre-16S rRNA. The polypeptide is Putative pre-16S rRNA nuclease (Brucella melitensis biotype 2 (strain ATCC 23457)).